We begin with the raw amino-acid sequence, 144 residues long: ATP synthase epsilon chain (144 aa).

It belongs to the ATPase epsilon chain family. In terms of assembly, F-type ATPases have 2 components, CF(1) - the catalytic core - and CF(0) - the membrane proton channel. CF(1) has five subunits: alpha(3), beta(3), gamma(1), delta(1), epsilon(1). CF(0) has three main subunits: a, b and c.

Its subcellular location is the cell inner membrane. In terms of biological role, produces ATP from ADP in the presence of a proton gradient across the membrane. In Ectopseudomonas mendocina (strain ymp) (Pseudomonas mendocina), this protein is ATP synthase epsilon chain.